The chain runs to 149 residues: Dehydrin Rab15 (149 aa).

The disordered stretch occupies residues 1–149 (MEFQGQHDNP…KIKEKLPGQH (149 aa)). Positions 78–93 (KEKIKEKLPGGHKDNQ) are enriched in basic and acidic residues. Gly residues predominate over residues 100–117 (TGTGGAYGPGTGTGGAYG). Residues 132–149 (GEKKGIMDKIKEKLPGQH) are compositionally biased toward basic and acidic residues.

Belongs to the plant dehydrin family.

The sequence is that of Dehydrin Rab15 (RAB15) from Triticum aestivum (Wheat).